The following is a 348-amino-acid chain: Anthranilate phosphoribosyltransferase (348 aa).

Residues Gly89, 92–93, Thr97, 99–102, 117–125, and Ser129 contribute to the 5-phospho-alpha-D-ribose 1-diphosphate site; these read GD, NIST, and KHGNRSVSS. An anthranilate-binding site is contributed by Gly89. Ser101 contacts Mg(2+). Asn120 lines the anthranilate pocket. Arg175 serves as a coordination point for anthranilate. Mg(2+) contacts are provided by Asp233 and Glu234.

It belongs to the anthranilate phosphoribosyltransferase family. In terms of assembly, homodimer. Mg(2+) serves as cofactor.

It catalyses the reaction N-(5-phospho-beta-D-ribosyl)anthranilate + diphosphate = 5-phospho-alpha-D-ribose 1-diphosphate + anthranilate. Its pathway is amino-acid biosynthesis; L-tryptophan biosynthesis; L-tryptophan from chorismate: step 2/5. Functionally, catalyzes the transfer of the phosphoribosyl group of 5-phosphorylribose-1-pyrophosphate (PRPP) to anthranilate to yield N-(5'-phosphoribosyl)-anthranilate (PRA). The chain is Anthranilate phosphoribosyltransferase from Shewanella sp. (strain W3-18-1).